The primary structure comprises 95 residues: uncharacterized protein (95 aa).

Positions 1–73 (MAHFKDDLQT…AQQPSMRTEL (73 aa)) are disordered. Composition is skewed to polar residues over residues 42–52 (SNHSPSVQESP) and 62–73 (GSAQQPSMRTEL).

This is an uncharacterized protein from Homo sapiens (Human).